We begin with the raw amino-acid sequence, 163 residues long: Ankyrin repeat domain-containing protein 37 (163 aa).

ANK repeat units follow at residues 29–58 (LGQS…DVNQ), 62–91 (FGEA…RIDM), and 95–124 (DGHT…TQDT). The short motif at 129–149 (QSSLHNLKETAAGVKRGQCCQ) is the Nuclear localization signal element.

The protein localises to the nucleus. It is found in the cytoplasm. The sequence is that of Ankyrin repeat domain-containing protein 37 (ankrd37) from Xenopus tropicalis (Western clawed frog).